We begin with the raw amino-acid sequence, 524 residues long: Cytochrome P450 CYP749A22 (524 aa).

A helical transmembrane segment spans residues 12 to 32 (TPILFQFLLSSLCVFLLFVFI). C472 serves as a coordination point for heme.

Belongs to the cytochrome P450 family. Heme is required as a cofactor.

It localises to the membrane. Its function is as follows. Probable heme-thiolate monooxygenase. This Panax ginseng (Korean ginseng) protein is Cytochrome P450 CYP749A22.